Consider the following 27-residue polypeptide: Paragonial peptide PS-1 (27 aa).

Residues 1 to 17 are compositionally biased toward low complexity; the sequence is DVPSANANANNQRTAAA. The tract at residues 1–27 is disordered; sequence DVPSANANANNQRTAAAKPQANAEASS.

In terms of tissue distribution, main cells of the accessory glands of males (paragonial gland).

It localises to the secreted. In terms of biological role, represses female sexual receptivity and stimulates oviposition. This peptide has a low activity. The protein is Paragonial peptide PS-1 (PapC) of Drosophila funebris (Fruit fly).